A 264-amino-acid polypeptide reads, in one-letter code: MKILVAVKQTAALEEDFEIREDGMDVDEDFMMYDLNEWDDFSLEEAMKIKESSDTDVEVVVVSVGPDRVDESLRKCLAKGADRAVRVWDDAAEGSDAIVVGRILTEVIKKEAPDMVFAGVQSSDQAYASTGISVASYLNWPHAAVVADLQYKPGDNKAVIRRELEGGMLQEVEINCPAVLTIQLGINKPRYASLRGIKQAATKPIEEVSLADIGLSANDVGAAQSMSRVRRMYIPEKGRATMIEGTISEQAAKIIQIINEFKGA.

AMP contacts are provided by residues alanine 6, 36–39, valine 64, 119–122, and 127–130; these read NEWD, GVQS, and YAST.

In terms of assembly, heterodimer of an alpha and a beta subunit. Forms a ternary complex with trimethylamine dehydrogenase.

Functionally, heterodimeric electron transfer flavoprotein that accepts electrons from trimethylamine dehydrogenase. It transfers the electrons to the main respiratory chain via ETF-ubiquinone oxidoreductase (ETF dehydrogenase). EtfB binds an AMP molecule that probably has a purely structural role. The chain is Electron transfer flavoprotein subunit beta (etfB) from Methylophilus methylotrophus (Bacterium W3A1).